We begin with the raw amino-acid sequence, 118 residues long: Large ribosomal subunit protein bL20c (118 aa).

This sequence belongs to the bacterial ribosomal protein bL20 family.

The protein resides in the plastid. Its subcellular location is the chloroplast. Binds directly to 23S ribosomal RNA and is necessary for the in vitro assembly process of the 50S ribosomal subunit. It is not involved in the protein synthesizing functions of that subunit. The protein is Large ribosomal subunit protein bL20c of Gracilaria tenuistipitata var. liui (Red alga).